The sequence spans 192 residues: Adenylate kinase (192 aa).

10–18 (GVPGVGSTT) contributes to the ATP binding site.

This sequence belongs to the archaeal adenylate kinase family. Monomer.

It localises to the cytoplasm. The enzyme catalyses AMP + ATP = 2 ADP. The polypeptide is Adenylate kinase (Methanococcus vannielii (strain ATCC 35089 / DSM 1224 / JCM 13029 / OCM 148 / SB)).